The sequence spans 149 residues: UPF0306 protein PM1958 (149 aa).

It belongs to the UPF0306 family.

In Pasteurella multocida (strain Pm70), this protein is UPF0306 protein PM1958.